We begin with the raw amino-acid sequence, 388 residues long: MSKKEIVAMILAGGQGSRLGVLTKNLAKPAVPFGGKYRIIDFPLSNCSNSGIYTVGVLTQYKPLKLNEHIGIGDTWDLDRRDGGVSILPPYQKEKGGDWYKGTANAIYQNIEFIERYDPEYVLILSGDHIYKMDYDKMLEMHKQKEADATIAVINVPMHEASRFGIMNTNEDLSIYEFEEKPEHPKSTNASMGIYIFNWKILKKFLEEDELDPSSSNDFGKNIIPKMLNSGKKLIAYPFNGYWKDVGTIESLWEANMDLLKYEDELSLYDSEWKIYSANPVRPAQFIGKDAEIKSSLTVEGCIVHGKVENSVLFQGVYVGKGAIVKDAVIMPNTKIEDNVLIEKAIIGSEAIVCKGCKIGDGNKISVIASKEVVIGSKEIIEECAMVK.

Alpha-D-glucose 1-phosphate is bound by residues tyrosine 100, glycine 165, 180-181 (EK), and serine 191.

The protein belongs to the bacterial/plant glucose-1-phosphate adenylyltransferase family. In terms of assembly, homotetramer.

The enzyme catalyses alpha-D-glucose 1-phosphate + ATP + H(+) = ADP-alpha-D-glucose + diphosphate. It functions in the pathway glycan biosynthesis; glycogen biosynthesis. Functionally, involved in the biosynthesis of ADP-glucose, a building block required for the elongation reactions to produce glycogen. Catalyzes the reaction between ATP and alpha-D-glucose 1-phosphate (G1P) to produce pyrophosphate and ADP-Glc. The sequence is that of Glucose-1-phosphate adenylyltransferase from Clostridium perfringens (strain SM101 / Type A).